Reading from the N-terminus, the 149-residue chain is Ribonuclease pancreatic (149 aa).

An N-terminal signal peptide occupies residues Met1–Gly25. The tract at residues Ala30–Thr49 is disordered. Residues Lys32 and Arg35 each contribute to the substrate site. His37 functions as the Proton acceptor in the catalytic mechanism. The span at Asp39–Thr49 shows a compositional bias: polar residues. 4 cysteine pairs are disulfide-bonded: Cys51–Cys109, Cys65–Cys120, Cys83–Cys135, and Cys90–Cys97. Lys66–Thr70 contacts substrate. An N-linked (GlcNAc...) asparagine glycan is attached at Asn87. Lys91 serves as a coordination point for substrate. The active-site Proton donor is His144.

This sequence belongs to the pancreatic ribonuclease family. Monomer. Interacts with and forms tight 1:1 complexes with RNH1. Dimerization of two such complexes may occur. Interaction with RNH1 inhibits this protein. Pancreas.

It is found in the secreted. The catalysed reaction is an [RNA] containing cytidine + H2O = an [RNA]-3'-cytidine-3'-phosphate + a 5'-hydroxy-ribonucleotide-3'-[RNA].. The enzyme catalyses an [RNA] containing uridine + H2O = an [RNA]-3'-uridine-3'-phosphate + a 5'-hydroxy-ribonucleotide-3'-[RNA].. Its function is as follows. Endonuclease that catalyzes the cleavage of RNA on the 3' side of pyrimidine nucleotides. Acts on single-stranded and double-stranded RNA. This Mus pahari (Gairdner's shrew-mouse) protein is Ribonuclease pancreatic (Rnase1).